The sequence spans 435 residues: Serine--tRNA ligase (435 aa).

Residue 242–244 coordinates L-serine; that stretch reads TAE. An ATP-binding site is contributed by 273 to 275; sequence RSE. Glu-296 provides a ligand contact to L-serine. 360–363 is an ATP binding site; sequence EISS. L-serine is bound at residue Ser-396.

The protein belongs to the class-II aminoacyl-tRNA synthetase family. Type-1 seryl-tRNA synthetase subfamily. In terms of assembly, homodimer. The tRNA molecule binds across the dimer.

It localises to the cytoplasm. It carries out the reaction tRNA(Ser) + L-serine + ATP = L-seryl-tRNA(Ser) + AMP + diphosphate + H(+). The enzyme catalyses tRNA(Sec) + L-serine + ATP = L-seryl-tRNA(Sec) + AMP + diphosphate + H(+). The protein operates within aminoacyl-tRNA biosynthesis; selenocysteinyl-tRNA(Sec) biosynthesis; L-seryl-tRNA(Sec) from L-serine and tRNA(Sec): step 1/1. In terms of biological role, catalyzes the attachment of serine to tRNA(Ser). Is also able to aminoacylate tRNA(Sec) with serine, to form the misacylated tRNA L-seryl-tRNA(Sec), which will be further converted into selenocysteinyl-tRNA(Sec). This Vibrio atlanticus (strain LGP32) (Vibrio splendidus (strain Mel32)) protein is Serine--tRNA ligase.